We begin with the raw amino-acid sequence, 630 residues long: Chaperone protein DnaK (630 aa).

T198 carries the post-translational modification Phosphothreonine; by autocatalysis. Residues 604 to 630 are disordered; that stretch reads AAAAPGEEAPKDDDVVDAEFSEVDDKK. A compositionally biased stretch (acidic residues) spans 617 to 630; that stretch reads DVVDAEFSEVDDKK.

The protein belongs to the heat shock protein 70 family.

Acts as a chaperone. The polypeptide is Chaperone protein DnaK (Rhizorhabdus wittichii (strain DSM 6014 / CCUG 31198 / JCM 15750 / NBRC 105917 / EY 4224 / RW1) (Sphingomonas wittichii)).